The chain runs to 909 residues: MTAKKLENNSNHAVTAEEVKILTDLLDESTRHLVGDEEFAKIKGLVKIAASSDHSQLESQIACLSNQEMIIVARYFATLPLLINITEDVDLATEVNLLNNTDKDYLGKLESTVDLVAEKDNAAEILSHVNVVPVLTAHPTQVQRKTILELTNKIHDQLRRHRDVKASTINRKEWTNQLRRYIEIIMQTDIIREKKLKVSNEIKNVMVYYPGSLIPAITKLTARYKELAREKGLNVDGATPITMGMWIGGDRDGNPYVTAETLRLSATIQSEVIFEYYVKALNDLYRTVSVSTSYVQPTPEVAELAKLSADNSPFRENEPYRRAFYYLESRLAHTEMELLDVFSKEAVVKKEAALKAPVYKDAYEFKKDLEAIKRSLIQNHDRAVTGGHFDALLEAIDVFGFHLATIDMRQDSSVNEACVAELLKSARICDNYSDLDEEEKIQILLSELNNDPRSLHSSNSPKSELLQRELKIYHTARLLKDTLGENVIKQHIISHTESISDMLEQAIMLKEYGLLDSEKARVQVVPLFETVEDLQNSREIMKRYLSFDIVKRWVASKGNYQEIMLGYSDSNKDGGYLASCWNLYKAQTELTAIGEEQGIKITFMHGRGGTVGRGGGPSYEAITSQPFGSIKDRIRTTEQGEIIQNKYGNKDAAYYNLEMLVSAAVDRMVSKQKVSQDHIQDFTASMDGIVEDSNRVYRELVFDNPHFHDYFFQATPIKEVSSLNIGSRPAARKKITELSGLRAIPWVFSWSQSRVMFPGWYGVGSAFKHFIDADPNNLKELQEMYQGWPFFHSLLSNVDMVLSKSNMEIAEKYADLCEDEATRSVFDIIKKEWELTKEVILQIEGHSKLLEDNPSLERSLDYRLPYFNVLNYVQLEMIKRGRQEKLSGIYESIIHITINGVASGLRNSG.

Active-site residues include H138 and K572.

It belongs to the PEPCase type 1 family. The cofactor is Mg(2+).

It catalyses the reaction oxaloacetate + phosphate = phosphoenolpyruvate + hydrogencarbonate. Its function is as follows. Forms oxaloacetate, a four-carbon dicarboxylic acid source for the tricarboxylic acid cycle. This chain is Phosphoenolpyruvate carboxylase, found in Lactobacillus delbrueckii subsp. bulgaricus (strain ATCC 11842 / DSM 20081 / BCRC 10696 / JCM 1002 / NBRC 13953 / NCIMB 11778 / NCTC 12712 / WDCM 00102 / Lb 14).